The primary structure comprises 332 residues: Autoinducer 2 import system permease protein LsrD (332 aa).

10 consecutive transmembrane segments (helical) span residues Tyr7–Ile27, Ile45–Ile65, Thr70–Leu90, Ala91–Ile111, Leu118–Met138, Phe162–Leu182, Val216–Gly236, Ser240–Asn260, Ile261–Leu281, and Ala288–Val308.

Belongs to the binding-protein-dependent transport system permease family. AraH/RbsC subfamily. The complex is composed of two ATP-binding proteins (LsrA), two transmembrane proteins (LsrC and LsrD) and a solute-binding protein (LsrB).

It is found in the cell inner membrane. Part of the ABC transporter complex LsrABCD involved in autoinducer 2 (AI-2) import. Probably responsible for the translocation of the substrate across the membrane. This Salmonella paratyphi B (strain ATCC BAA-1250 / SPB7) protein is Autoinducer 2 import system permease protein LsrD (lsrD).